The following is a 412-amino-acid chain: P-selectin glycoprotein ligand 1 (412 aa).

The N-terminal stretch at 1–17 is a signal peptide; it reads MPLQLLLLLILLGPGNS. A propeptide spanning residues 18 to 41 is cleaved from the precursor; that stretch reads LQLWDTWADEAEKALGPLLARDRR. Residues 18–320 lie on the Extracellular side of the membrane; sequence LQLWDTWADE…APDHISVKQC (303 aa). Glutamine 42 is subject to Pyrrolidone carboxylic acid. Sulfotyrosine is present on residues tyrosine 46, tyrosine 48, and tyrosine 51. The tract at residues 56–95 is disordered; it reads ETEPPEMLRNSTDTTPLTGPGTPESTTVEPAARRSTGLDA. The O-linked (GalNAc...) threonine glycan is linked to threonine 57. The N-linked (GlcNAc...) asparagine glycan is linked to asparagine 65. Residues 66-82 show a composition bias toward low complexity; that stretch reads STDTTPLTGPGTPESTT. The N-linked (GlcNAc...) asparagine glycan is linked to asparagine 111. Tandem repeats lie at residues 122 to 131, 132 to 141, 142 to 151, 162 to 171, 182 to 191, 192 to 201, 202 to 211, 212 to 221, 222 to 231, 232 to 241, 242 to 251, and 252 to 261. The 12 X 10 AA tandem repeats stretch occupies residues 122–261; the sequence is QTTQPAATEA…QTTPLAAMEA (140 aa). 2 disordered regions span residues 125–146 and 166–252; these read QPAATEAQTTQPVPTEAQTTPL and LAAT…TEAQ. N-linked (GlcNAc...) asparagine glycosylation is present at asparagine 302. The chain crosses the membrane as a helical span at residues 321-341; that stretch reads LLAILILALVATIFFVCTVVL. Over 342–412 the chain is Cytoplasmic; it reads AVRLSRKGHM…DDLTLHSFLP (71 aa). Positions 374 to 412 are disordered; it reads EGPSATANGGLSKAKSPGLTPEPREDREGDDLTLHSFLP. Residues 395-406 are compositionally biased toward basic and acidic residues; that stretch reads EPREDREGDDLT. Threonine 406 carries the phosphothreonine modification. A Phosphoserine modification is found at serine 409.

Homodimer; disulfide-linked. Interaction with P-, E- and L-selectins, through their lectin/EGF domains, is required for promoting recruitment and rolling of leukocytes. These interactions require sialyl Lewis X glycan modification but there is a differing dependence for tyrosine sulfations. Sulfation on Tyr-51 of PSGL1 is most important for high affinity L-selectin/SELL binding while P-selectin/SELP requires sulfation on Tyr-48. E-selectin/SELE binds with much lower affinity and requires the sLe(x) epitope, but apparently not tyrosine sulfation. Dimerization appears not to be required for P-selectin/SELP binding. Interacts with SNX20. Interacts with MSN and SYK; mediates the activation of SYK by SELPLG. Interacts with HAVCR1. In terms of assembly, (Microbial infection) Interacts with enterovirus 71 capsid proteins. As to quaternary structure, (Microbial infection) Interacts with Staphylococcus aureus proteins SSL5 and SSL11; these interactions prevent SELPLG-mediated neutrophil rolling. Post-translationally, displays complex, core-2, sialylated and fucosylated O-linked oligosaccharides, at least some of which appear to contain poly-N-acetyllactosamine with varying degrees of substitution. Mainly disialylated or neutral forms of the core-2 tetrasaccharide, Galbeta1--&gt;4GlcNAcbeta1--&gt;6(Galbeta1--&gt;3)GalNAcOH. The GlcN:GalN ratio is approximately 2:1 and the Man:Fuc ratio 3:5. Contains about 14% fucose with alpha-1,3 linkage present in two forms: One species is a disialylated, monofucosylated glycan, and the other, a monosialylated, trifucosylated glycan with a polylactosamine backbone. The fucosylated forms carry the Lewis antigen and are important for interaction with selectins and for functioning in leukocyte rolling. The modification containing the sialyl Lewis X glycan is on Thr-57. No sulfated O-glycans. Some N-glycosylation. In terms of processing, sulfation, in conjunction with the SLe(x)-containing glycan, is necessary for P- and L-selectin binding. High affinity P-selectin binding has a preferred requirement for the isomer sulfated on both Tyr-48 and Tyr-51, whereas L-selectin binding requires predominantly sulfation on Tyr-51 with sulfation on Tyr-48 playing only a minor role. These sulfations play an important role in L- and P-selectin-mediated neutrophil recruitment, and leukocyte rolling. As to expression, expressed on neutrophils, monocytes and most lymphocytes.

Its subcellular location is the membrane. In terms of biological role, a SLe(x)-type proteoglycan, which through high affinity, calcium-dependent interactions with E-, P- and L-selectins, mediates rapid rolling of leukocytes over vascular surfaces during the initial steps in inflammation. Critical for the initial leukocyte capture. Functionally, (Microbial infection) Acts as a receptor for enterovirus 71. This Homo sapiens (Human) protein is P-selectin glycoprotein ligand 1 (SELPLG).